We begin with the raw amino-acid sequence, 102 residues long: ATP-dependent Clp protease adapter protein ClpS (102 aa).

It belongs to the ClpS family. In terms of assembly, binds to the N-terminal domain of the chaperone ClpA.

In terms of biological role, involved in the modulation of the specificity of the ClpAP-mediated ATP-dependent protein degradation. The sequence is that of ATP-dependent Clp protease adapter protein ClpS from Shewanella baltica (strain OS155 / ATCC BAA-1091).